Here is a 611-residue protein sequence, read N- to C-terminus: Acetylcholinesterase (611 aa).

The first 31 residues, 1-31, serve as a signal peptide directing secretion; the sequence is MRPPWCPLYTPSLAAPILLLLLFLLGGGAEA. The cysteines at positions 97 and 124 are disulfide-linked. Ser-231 functions as the Acyl-ester intermediate in the catalytic mechanism. Cys-285 and Cys-300 are disulfide-bonded. An N-linked (GlcNAc...) asparagine glycan is attached at Asn-293. Glu-362 serves as the catalytic Charge relay system. An N-linked (GlcNAc...) asparagine glycan is attached at Asn-378. Cys-437 and Cys-557 form a disulfide bridge. The Charge relay system role is filled by His-475. N-linked (GlcNAc...) asparagine glycosylation occurs at Asn-492.

This sequence belongs to the type-B carboxylesterase/lipase family. As to quaternary structure, interacts with PRIMA1. The interaction with PRIMA1 is required to anchor it to the basal lamina of cells and organize into tetramers. Isoform H generates GPI-anchored dimers; disulfide linked. Isoform T generates multiple structures, ranging from monomers and dimers to collagen-tailed and hydrophobic-tailed forms, in which catalytic tetramers are associated with anchoring proteins that attach them to the basal lamina or to cell membranes. In the collagen-tailed forms, isoform T subunits are associated with a specific collagen, COLQ, which triggers the formation of isoform T tetramers, from monomers and dimers.

It localises to the synapse. Its subcellular location is the secreted. The protein resides in the cell membrane. It carries out the reaction acetylcholine + H2O = choline + acetate + H(+). Its function is as follows. Terminates signal transduction at the neuromuscular junction by rapid hydrolysis of the acetylcholine released into the synaptic cleft. This is Acetylcholinesterase (ACHE) from Felis catus (Cat).